Here is a 545-residue protein sequence, read N- to C-terminus: Transducer protein Htr7 (545 aa).

A run of 3 helical transmembrane segments spans residues 10–30 (AVVA…AAAL), 44–64 (FWMA…SLML), and 80–100 (PLMA…LAIV). The tract at residues 111–157 (AQRRQEAEEERAEAERAREKAEQKQAEAERQTAEAESAKQDARERSA) is disordered. A compositionally biased stretch (basic and acidic residues) spans 123 to 157 (EAERAREKAEQKQAEAERQTAEAESAKQDARERSA). The 54-residue stretch at 164 to 217 (ADLESQATEVGATLEAASDGDLTARVDATTDNAEIAEVATVVNDMLTTMERTID) folds into the HAMP domain. Positions 236-476 (GAKEIQDASQ…RVVSSVDDIA (241 aa)) constitute a Methyl-accepting transducer domain. The residue at position 281 (E281) is a Glutamate methyl ester (Glu). The tract at residues 521-545 (LNEFRTEATGTAHGEATDAPAGQSD) is disordered. A compositionally biased stretch (low complexity) spans 527–539 (EATGTAHGEATDA).

This sequence belongs to the methyl-accepting chemotaxis (MCP) protein family. Methylated by CheR.

Its subcellular location is the cell membrane. In terms of biological role, potentially involved in chemo- or phototactic signal transduction. The protein is Transducer protein Htr7 (htr7) of Halobacterium salinarum (strain ATCC 29341 / DSM 671 / R1).